The sequence spans 482 residues: UDP-N-acetylmuramate--L-alanine ligase (482 aa).

115 to 121 (GTHGKTT) provides a ligand contact to ATP.

Belongs to the MurCDEF family.

The protein localises to the cytoplasm. The catalysed reaction is UDP-N-acetyl-alpha-D-muramate + L-alanine + ATP = UDP-N-acetyl-alpha-D-muramoyl-L-alanine + ADP + phosphate + H(+). Its pathway is cell wall biogenesis; peptidoglycan biosynthesis. In terms of biological role, cell wall formation. This Rhodospirillum centenum (strain ATCC 51521 / SW) protein is UDP-N-acetylmuramate--L-alanine ligase.